Consider the following 575-residue polypeptide: DNA mismatch repair protein MutL (575 aa).

The protein belongs to the DNA mismatch repair MutL/HexB family.

Its function is as follows. This protein is involved in the repair of mismatches in DNA. It is required for dam-dependent methyl-directed DNA mismatch repair. May act as a 'molecular matchmaker', a protein that promotes the formation of a stable complex between two or more DNA-binding proteins in an ATP-dependent manner without itself being part of a final effector complex. The protein is DNA mismatch repair protein MutL of Coxiella burnetii (strain CbuG_Q212) (Coxiella burnetii (strain Q212)).